Reading from the N-terminus, the 146-residue chain is Hemoglobin subunit beta (146 aa).

Val-1 bears the N-acetylvaline mark. Residues 2 to 146 enclose the Globin domain; it reads HLTGEEKAAV…VANALAHKYH (145 aa). Thr-12 carries the phosphothreonine modification. A Phosphoserine modification is found at Ser-44. At Lys-59 the chain carries N6-acetyllysine. His-63 serves as a coordination point for heme b. Lys-82 carries the post-translational modification N6-acetyllysine. Residue His-92 coordinates heme b. S-nitrosocysteine is present on Cys-93. Lys-144 carries the post-translational modification N6-acetyllysine.

Belongs to the globin family. Heterotetramer of two alpha chains and two beta chains. Red blood cells.

Functionally, involved in oxygen transport from the lung to the various peripheral tissues. This Ailurus fulgens (Himalayan red panda) protein is Hemoglobin subunit beta (HBB).